The sequence spans 218 residues: MPIDFRMTKKGLILLIESYSSIESLKQEIMAKFNEARDFFSEGDEISLMLTQETSKPDDIVNIVSLLGNLGVRVKDILVGSLEKKNVKIGQKYDLVREKVTEVRGAQVIKRNLRSGQIVVHNYDIIVFGNVHPGAEIIAGGSIVIFGTARGILRAGYSVGDEAVIAALDLKPSLIQISGLISQDYNVYETPAVAHIRTGRIVVEKIESAKFEVKGGKI.

It belongs to the MinC family. Interacts with MinD and FtsZ.

Its function is as follows. Cell division inhibitor that blocks the formation of polar Z ring septums. Rapidly oscillates between the poles of the cell to destabilize FtsZ filaments that have formed before they mature into polar Z rings. Prevents FtsZ polymerization. The protein is Probable septum site-determining protein MinC of Kosmotoga olearia (strain ATCC BAA-1733 / DSM 21960 / TBF 19.5.1).